A 158-amino-acid polypeptide reads, in one-letter code: MQGRLSAWLVKHGLIHRSLGFDYQGIETLQIKPEDWHSIAVIFYVYGYNYLRSQCAYDVAPGGLLASVYHLTRIEDGVAQPEELCIKVFASRRNPRIPSVFWVWKSVDFQERESYDMLGISYDNHPRLKRILMPESWIGWPLRKDYIAPNFYEIQDAH.

This sequence belongs to the complex I 30 kDa subunit family. NDH is composed of at least 16 different subunits, 5 of which are encoded in the nucleus.

The protein resides in the plastid. It is found in the chloroplast thylakoid membrane. The catalysed reaction is a plastoquinone + NADH + (n+1) H(+)(in) = a plastoquinol + NAD(+) + n H(+)(out). It carries out the reaction a plastoquinone + NADPH + (n+1) H(+)(in) = a plastoquinol + NADP(+) + n H(+)(out). In terms of biological role, NDH shuttles electrons from NAD(P)H:plastoquinone, via FMN and iron-sulfur (Fe-S) centers, to quinones in the photosynthetic chain and possibly in a chloroplast respiratory chain. The immediate electron acceptor for the enzyme in this species is believed to be plastoquinone. Couples the redox reaction to proton translocation, and thus conserves the redox energy in a proton gradient. The protein is NAD(P)H-quinone oxidoreductase subunit J, chloroplastic of Solanum lycopersicum (Tomato).